A 97-amino-acid polypeptide reads, in one-letter code: Peptide YY (97 aa).

An N-terminal signal peptide occupies residues 1 to 28 (MMSGRRSWPAMATVLLTLLVCLGELVDA). Position 41 is a phosphoserine (Ser41). A Phenylalanine amide modification is found at Phe64. Positions 68–97 (DFSEALLSILLFPDREDPPVKSRPEGAYLW) are excised as a propeptide.

Belongs to the NPY family.

It localises to the secreted. This gut peptide inhibits exocrine pancreatic secretion, has a vasoconstrictory action and inhibitis jejunal and colonic mobility. This is Peptide YY (PYY) from Bos taurus (Bovine).